Here is a 647-residue protein sequence, read N- to C-terminus: NADP-dependent malic enzyme, chloroplastic (647 aa).

The N-terminal 61 residues, 1–61 (MMSLNSSSVV…VDGAVKDVNA (61 aa)), are a transit peptide targeting the chloroplast. The active-site Proton donor is Y195. Position 248 (R248) interacts with NAD(+). The Proton acceptor role is filled by K266. 3 residues coordinate a divalent metal cation: E338, D339, and D362. D362 contributes to the NAD(+) binding site. Residue 391-407 (LFLGAGEAGTGIAELIA) coordinates NADP(+). Residue N503 participates in NAD(+) binding.

This sequence belongs to the malic enzymes family. In terms of assembly, homotetramer. The cofactor is Mg(2+). Requires Mn(2+) as cofactor.

The protein localises to the plastid. The protein resides in the chloroplast. The enzyme catalyses (S)-malate + NADP(+) = pyruvate + CO2 + NADPH. The catalysed reaction is oxaloacetate + H(+) = pyruvate + CO2. Its pathway is photosynthesis; C3 acid pathway. Its function is as follows. The chloroplastic ME isoform decarboxylates malate shuttled from neighboring mesophyll cells. The CO(2) released is then refixed by ribulose-bisphosphate carboxylase. This pathway eliminates the photorespiratory loss of CO(2) that occurs in most plants. In Flaveria pringlei, this protein is NADP-dependent malic enzyme, chloroplastic (MODA).